The primary structure comprises 356 residues: Ferrochelatase (356 aa).

Positions 214 and 295 each coordinate Fe cation.

Belongs to the ferrochelatase family.

It localises to the cytoplasm. The enzyme catalyses heme b + 2 H(+) = protoporphyrin IX + Fe(2+). It functions in the pathway porphyrin-containing compound metabolism; protoheme biosynthesis; protoheme from protoporphyrin-IX: step 1/1. Its function is as follows. Catalyzes the ferrous insertion into protoporphyrin IX. This Paraburkholderia phymatum (strain DSM 17167 / CIP 108236 / LMG 21445 / STM815) (Burkholderia phymatum) protein is Ferrochelatase.